Reading from the N-terminus, the 419-residue chain is Chalcone synthase D (419 aa).

The active site involves Cys164.

Belongs to the thiolase-like superfamily. Chalcone/stilbene synthases family.

The catalysed reaction is (E)-4-coumaroyl-CoA + 3 malonyl-CoA + 3 H(+) = 2',4,4',6'-tetrahydroxychalcone + 3 CO2 + 4 CoA. It functions in the pathway secondary metabolite biosynthesis; flavonoid biosynthesis. Its function is as follows. The primary product of this enzyme is 4,2',4',6'-tetrahydroxychalcone (also termed naringenin-chalcone or chalcone) which can under specific conditions spontaneously isomerize into naringenin. The chain is Chalcone synthase D (CHSD) from Petunia hybrida (Petunia).